We begin with the raw amino-acid sequence, 428 residues long: GTPase HflX (428 aa).

Residues 214-374 (PVVAIVGYTN…AIERELFKET (161 aa)) enclose the Hflx-type G domain. GTP is bound by residues 220 to 227 (GYTNAGKS), 245 to 249 (FATLD), 267 to 270 (DTVG), 333 to 336 (NKID), and 352 to 354 (SAK). 2 residues coordinate Mg(2+): S227 and T247.

This sequence belongs to the TRAFAC class OBG-HflX-like GTPase superfamily. HflX GTPase family. Monomer. Associates with the 50S ribosomal subunit. It depends on Mg(2+) as a cofactor.

The protein resides in the cytoplasm. Functionally, GTPase that associates with the 50S ribosomal subunit and may have a role during protein synthesis or ribosome biogenesis. In Caldanaerobacter subterraneus subsp. tengcongensis (strain DSM 15242 / JCM 11007 / NBRC 100824 / MB4) (Thermoanaerobacter tengcongensis), this protein is GTPase HflX.